The following is a 245-amino-acid chain: Alpha carbonic anhydrase 2 (245 aa).

A signal peptide spans 1–23; sequence MDKISIRCFIFLVLTSFVTTVSC. The Alpha-carbonic anhydrase domain maps to 37–245; the sequence is HEFSYEWNQE…THRYFLLFFT (209 aa). A disulfide bridge links cysteine 62 with cysteine 222. N-linked (GlcNAc...) asparagine glycosylation is present at asparagine 95. Histidine 103 serves as the catalytic Proton acceptor. N-linked (GlcNAc...) asparagine glycosylation is present at asparagine 120. Positions 130, 132, and 149 each coordinate Zn(2+). Asparagine 156 carries an N-linked (GlcNAc...) asparagine glycan. 218 to 219 provides a ligand contact to substrate; that stretch reads TT.

Belongs to the alpha-class carbonic anhydrase family. It depends on Zn(2+) as a cofactor. In terms of processing, N-glycosylated. In terms of tissue distribution, expressed in stems and roots.

It is found in the plastid. The protein localises to the chloroplast stroma. The catalysed reaction is hydrogencarbonate + H(+) = CO2 + H2O. Reversible hydration of carbon dioxide. The protein is Alpha carbonic anhydrase 2 (ACA2) of Arabidopsis thaliana (Mouse-ear cress).